Reading from the N-terminus, the 305-residue chain is Beta-lactamase ROB-1 (305 aa).

The N-terminal stretch at 1 to 33 (MLNKLKIGTLLLLTLTACSPNSVHSVTSNPQPA) is a signal peptide. The active-site Acyl-ester intermediate is the serine 86. 248–250 (KSG) provides a ligand contact to substrate.

This sequence belongs to the class-A beta-lactamase family.

It carries out the reaction a beta-lactam + H2O = a substituted beta-amino acid. In Actinobacillus pleuropneumoniae (Haemophilus pleuropneumoniae), this protein is Beta-lactamase ROB-1 (rob1).